The chain runs to 496 residues: Cobyric acid synthase (496 aa).

The region spanning 264 to 458 (HTRIAVVAYP…LHGLFEDAAV (195 aa)) is the GATase cobBQ-type domain. The Nucleophile role is filled by cysteine 345. Histidine 450 is an active-site residue.

Belongs to the CobB/CobQ family. CobQ subfamily.

Its pathway is cofactor biosynthesis; adenosylcobalamin biosynthesis. In terms of biological role, catalyzes amidations at positions B, D, E, and G on adenosylcobyrinic A,C-diamide. NH(2) groups are provided by glutamine, and one molecule of ATP is hydrogenolyzed for each amidation. The polypeptide is Cobyric acid synthase (Acidovorax ebreus (strain TPSY) (Diaphorobacter sp. (strain TPSY))).